We begin with the raw amino-acid sequence, 199 residues long: Holliday junction branch migration complex subunit RuvA (199 aa).

Residues 1–63 form a domain I region; that stretch reads MIASVRGEVL…EDSMTLYGFS (63 aa). Residues 64–141 are domain II; the sequence is DTESKDLFSL…DAVATTAGAA (78 aa). A flexible linker region spans residues 141 to 145; that stretch reads ASGAV. The tract at residues 146 to 199 is domain III; the sequence is VGSSIRDQIVEALEGLGFPIKQAEQATDSVLAESPEATTSVALRSALSLLGKTR.

Belongs to the RuvA family. Homotetramer. Forms an RuvA(8)-RuvB(12)-Holliday junction (HJ) complex. HJ DNA is sandwiched between 2 RuvA tetramers; dsDNA enters through RuvA and exits via RuvB. An RuvB hexamer assembles on each DNA strand where it exits the tetramer. Each RuvB hexamer is contacted by two RuvA subunits (via domain III) on 2 adjacent RuvB subunits; this complex drives branch migration. In the full resolvosome a probable DNA-RuvA(4)-RuvB(12)-RuvC(2) complex forms which resolves the HJ.

The protein localises to the cytoplasm. The RuvA-RuvB-RuvC complex processes Holliday junction (HJ) DNA during genetic recombination and DNA repair, while the RuvA-RuvB complex plays an important role in the rescue of blocked DNA replication forks via replication fork reversal (RFR). RuvA specifically binds to HJ cruciform DNA, conferring on it an open structure. The RuvB hexamer acts as an ATP-dependent pump, pulling dsDNA into and through the RuvAB complex. HJ branch migration allows RuvC to scan DNA until it finds its consensus sequence, where it cleaves and resolves the cruciform DNA. This Rhodococcus erythropolis (strain PR4 / NBRC 100887) protein is Holliday junction branch migration complex subunit RuvA.